Here is a 710-residue protein sequence, read N- to C-terminus: Polyribonucleotide nucleotidyltransferase (710 aa).

2 residues coordinate Mg(2+): D491 and D497. Residues 559–618 form the KH domain; that stretch reads PRLITIKINPEKIRDVIGKGGAVIRALTEETGTQIDISDEGVVTIASVDAAAGQEAKRRI. Residues 628 to 696 enclose the S1 motif domain; that stretch reads GKVYEGTVLK…DRGRLKLSMK (69 aa).

This sequence belongs to the polyribonucleotide nucleotidyltransferase family. The cofactor is Mg(2+).

The protein localises to the cytoplasm. The enzyme catalyses RNA(n+1) + phosphate = RNA(n) + a ribonucleoside 5'-diphosphate. In terms of biological role, involved in mRNA degradation. Catalyzes the phosphorolysis of single-stranded polyribonucleotides processively in the 3'- to 5'-direction. The sequence is that of Polyribonucleotide nucleotidyltransferase from Herminiimonas arsenicoxydans.